We begin with the raw amino-acid sequence, 244 residues long: Type III pantothenate kinase (244 aa).

8-15 contacts ATP; the sequence is DQGNSACK. Position 94–97 (94–97) interacts with substrate; it reads GADR. Aspartate 96 serves as the catalytic Proton acceptor. Residue aspartate 117 coordinates K(+). Threonine 120 contributes to the ATP binding site. Threonine 175 is a binding site for substrate.

It belongs to the type III pantothenate kinase family. Homodimer. NH4(+) serves as cofactor. The cofactor is K(+).

Its subcellular location is the cytoplasm. It catalyses the reaction (R)-pantothenate + ATP = (R)-4'-phosphopantothenate + ADP + H(+). Its pathway is cofactor biosynthesis; coenzyme A biosynthesis; CoA from (R)-pantothenate: step 1/5. In terms of biological role, catalyzes the phosphorylation of pantothenate (Pan), the first step in CoA biosynthesis. This is Type III pantothenate kinase from Porphyromonas gingivalis (strain ATCC 33277 / DSM 20709 / CIP 103683 / JCM 12257 / NCTC 11834 / 2561).